Consider the following 364-residue polypeptide: mRNA decay activator protein ZFP36L2-B (364 aa).

The segment covering 102 to 111 (SFSENGERSQ) has biased composition (basic and acidic residues). The disordered stretch occupies residues 102–129 (SFSENGERSQHLLHLQQQQQQQKAGAQV). The segment covering 113-123 (LLHLQQQQQQQ) has biased composition (low complexity). The RNA-binding signature appears at 133-138 (RYKTEL). 2 C3H1-type zinc fingers span residues 133–161 (RYKTELCRPFEENGACKYGEKCQFAHGFH) and 171–199 (KYKTELCRTFHTIGFCPYGPRCHFIHNAE). The RNA-binding stretch occupies residues 150 to 191 (YGEKCQFAHGFHELRSLTRHPKYKTELCRTFHTIGFCPYGPR). Residues 308–350 (SESPVFDAPPSPPDSLSDRDSYLSGSLSSGSLSGSDSPTLDSN) form a disordered region. Low complexity predominate over residues 329–348 (YLSGSLSSGSLSGSDSPTLD).

Post-translationally, phosphorylated. In terms of tissue distribution, remains unlocalized in the egg and early embryo. From stage 21 (late neurula), expressed around the pronephros in the anterior crests, pharyngeal arch, hindbrain, mesodermal tissues around the pronephros and tail-bud. This expression pattern is maintained up to the tadpole stage.

The protein resides in the nucleus. The protein localises to the cytoplasm. Zinc-finger RNA-binding protein that destabilizes several cytoplasmic AU-rich element (ARE)-containing mRNA transcripts by promoting their poly(A) tail removal or deadenylation, and hence provide a mechanism for attenuating protein synthesis. Acts as a 3'-untranslated region (UTR) ARE mRNA-binding adapter protein to communicate signaling events to the mRNA decay machinery. Functions by recruiting the CCR4-NOT deadenylase complex and probably other components of the cytoplasmic RNA decay machinery to the bound ARE-containing mRNAs, and hence promotes ARE-mediated mRNA deadenylation and decay processes. Binds to 3'-UTR ARE of numerous mRNAs. Also induces the degradation of ARE-containing mRNAs even in absence of poly(A) tail. Required for tubulogenesis during pronephros development. The chain is mRNA decay activator protein ZFP36L2-B (zfp36l2-B) from Xenopus laevis (African clawed frog).